The chain runs to 190 residues: Elongation factor P-like protein (190 aa).

It belongs to the elongation factor P family.

This is Elongation factor P-like protein from Pseudoalteromonas translucida (strain TAC 125).